The sequence spans 485 residues: Probable cobyric acid synthase (485 aa).

One can recognise a GATase cobBQ-type domain in the interval 250 to 435; that stretch reads EVEIAVIRLP…LHGLFDNENI (186 aa). C328 acts as the Nucleophile in catalysis. H427 is an active-site residue.

It belongs to the CobB/CobQ family. CobQ subfamily.

Its pathway is cofactor biosynthesis; adenosylcobalamin biosynthesis. Its function is as follows. Catalyzes amidations at positions B, D, E, and G on adenosylcobyrinic A,C-diamide. NH(2) groups are provided by glutamine, and one molecule of ATP is hydrogenolyzed for each amidation. The polypeptide is Probable cobyric acid synthase (Methanosarcina acetivorans (strain ATCC 35395 / DSM 2834 / JCM 12185 / C2A)).